Reading from the N-terminus, the 312-residue chain is Ribosomal protein L11 methyltransferase (312 aa).

S-adenosyl-L-methionine-binding residues include Thr162, Gly183, Asp205, and Asn248.

It belongs to the methyltransferase superfamily. PrmA family.

The protein resides in the cytoplasm. The enzyme catalyses L-lysyl-[protein] + 3 S-adenosyl-L-methionine = N(6),N(6),N(6)-trimethyl-L-lysyl-[protein] + 3 S-adenosyl-L-homocysteine + 3 H(+). Functionally, methylates ribosomal protein L11. This Anoxybacillus flavithermus (strain DSM 21510 / WK1) protein is Ribosomal protein L11 methyltransferase.